The sequence spans 331 residues: UBX domain-containing protein 2B (331 aa).

2 stretches are compositionally biased toward basic and acidic residues: residues 1-16 (MAEGGRAEPEEQERGS) and 37-48 (DEMKCKSSKPDR). Positions 1–70 (MAEGGRAEPE…PHRLYSGDHK (70 aa)) are disordered. Position 2 is an N-acetylalanine (alanine 2). The residue at position 56 (serine 56) is a Phosphoserine. A Phosphothreonine modification is found at threonine 59. Serine 66 is modified (phosphoserine). The SEP domain occupies 141 to 206 (DVQVLLKLWR…MEDHQDQEYI (66 aa)). A phosphoserine mark is found at serine 231, serine 234, and serine 235. One can recognise a UBX domain in the interval 252–329 (DSMPTTKIQI…DILNTVILQQ (78 aa)).

This sequence belongs to the NSFL1C family. In terms of assembly, interacts with VCP. Does not bind ubiquitin.

The protein resides in the nucleus. The protein localises to the cytoplasm. It localises to the cytosol. Its subcellular location is the endoplasmic reticulum. It is found in the golgi apparatus. The protein resides in the cytoskeleton. The protein localises to the microtubule organizing center. It localises to the centrosome. Functionally, adapter protein required for Golgi and endoplasmic reticulum biogenesis. Involved in Golgi and endoplasmic reticulum maintenance during interphase and in their reassembly at the end of mitosis. The complex formed with VCP has membrane fusion activity; membrane fusion activity requires USO1-GOLGA2 tethering and BET1L. VCPIP1 is also required, but not its deubiquitinating activity. Together with NSFL1C/p47, regulates the centrosomal levels of kinase AURKA/Aurora A during mitotic progression by promoting AURKA removal from centrosomes in prophase. Also, regulates spindle orientation during mitosis. The polypeptide is UBX domain-containing protein 2B (Ubxn2b) (Mus musculus (Mouse)).